The primary structure comprises 154 residues: 6,7-dimethyl-8-ribityllumazine synthase (154 aa).

5-amino-6-(D-ribitylamino)uracil contacts are provided by residues Phe26, 60 to 62 (ALE), and 84 to 86 (CII). 89–90 (ET) is a binding site for (2S)-2-hydroxy-3-oxobutyl phosphate. The active-site Proton donor is His92. Asn117 lines the 5-amino-6-(D-ribitylamino)uracil pocket. Arg131 provides a ligand contact to (2S)-2-hydroxy-3-oxobutyl phosphate.

The protein belongs to the DMRL synthase family.

It carries out the reaction (2S)-2-hydroxy-3-oxobutyl phosphate + 5-amino-6-(D-ribitylamino)uracil = 6,7-dimethyl-8-(1-D-ribityl)lumazine + phosphate + 2 H2O + H(+). It functions in the pathway cofactor biosynthesis; riboflavin biosynthesis; riboflavin from 2-hydroxy-3-oxobutyl phosphate and 5-amino-6-(D-ribitylamino)uracil: step 1/2. In terms of biological role, catalyzes the formation of 6,7-dimethyl-8-ribityllumazine by condensation of 5-amino-6-(D-ribitylamino)uracil with 3,4-dihydroxy-2-butanone 4-phosphate. This is the penultimate step in the biosynthesis of riboflavin. The protein is 6,7-dimethyl-8-ribityllumazine synthase of Acidovorax sp. (strain JS42).